The primary structure comprises 188 residues: UPF0340 protein GK3370 (188 aa).

This sequence belongs to the UPF0340 family.

This Geobacillus kaustophilus (strain HTA426) protein is UPF0340 protein GK3370.